Here is a 150-residue protein sequence, read N- to C-terminus: Putative pre-16S rRNA nuclease (150 aa).

Belongs to the YqgF nuclease family.

Its subcellular location is the cytoplasm. Functionally, could be a nuclease involved in processing of the 5'-end of pre-16S rRNA. The polypeptide is Putative pre-16S rRNA nuclease (Chlamydia abortus (strain DSM 27085 / S26/3) (Chlamydophila abortus)).